Here is a 475-residue protein sequence, read N- to C-terminus: Aspartyl/glutamyl-tRNA(Asn/Gln) amidotransferase subunit B (475 aa).

This sequence belongs to the GatB/GatE family. GatB subfamily. As to quaternary structure, heterotrimer of A, B and C subunits.

It carries out the reaction L-glutamyl-tRNA(Gln) + L-glutamine + ATP + H2O = L-glutaminyl-tRNA(Gln) + L-glutamate + ADP + phosphate + H(+). It catalyses the reaction L-aspartyl-tRNA(Asn) + L-glutamine + ATP + H2O = L-asparaginyl-tRNA(Asn) + L-glutamate + ADP + phosphate + 2 H(+). Its function is as follows. Allows the formation of correctly charged Asn-tRNA(Asn) or Gln-tRNA(Gln) through the transamidation of misacylated Asp-tRNA(Asn) or Glu-tRNA(Gln) in organisms which lack either or both of asparaginyl-tRNA or glutaminyl-tRNA synthetases. The reaction takes place in the presence of glutamine and ATP through an activated phospho-Asp-tRNA(Asn) or phospho-Glu-tRNA(Gln). The chain is Aspartyl/glutamyl-tRNA(Asn/Gln) amidotransferase subunit B from Caldanaerobacter subterraneus subsp. tengcongensis (strain DSM 15242 / JCM 11007 / NBRC 100824 / MB4) (Thermoanaerobacter tengcongensis).